Reading from the N-terminus, the 142-residue chain is Small ribosomal subunit protein uS12 (142 aa).

The protein belongs to the universal ribosomal protein uS12 family. In terms of assembly, part of the 30S ribosomal subunit.

Its function is as follows. With S4 and S5 plays an important role in translational accuracy. Located at the interface of the 30S and 50S subunits. The protein is Small ribosomal subunit protein uS12 of Thermoplasma volcanium (strain ATCC 51530 / DSM 4299 / JCM 9571 / NBRC 15438 / GSS1).